Reading from the N-terminus, the 1053-residue chain is Ubiquitin-like modifier-activating enzyme 6 (1053 aa).

Methionine 1 bears the N-acetylmethionine mark. Arginine 46 serves as a coordination point for ATP. Threonine 54 carries the post-translational modification Phosphothreonine. ATP contacts are provided by alanine 470 and aspartate 497. Mg(2+) contacts are provided by aspartate 499 and glutamate 502. ATP is bound by residues asparagine 505, arginine 508, glutamine 509, and lysine 521. Residue lysine 544 is modified to N6-acetyllysine. Valine 545 serves as a coordination point for ATP. Residue aspartate 569 coordinates Mg(2+). Asparagine 570 provides a ligand contact to ATP. Cysteine 625 serves as the catalytic Glycyl thioester intermediate. Lysine 729 carries the post-translational modification N6-acetyllysine. Residue serine 737 is modified to Phosphoserine.

Belongs to the ubiquitin-activating E1 family. In terms of assembly, forms a thioester with UBD in cells stimulated with tumor necrosis factor-alpha (TNFa) and interferon-gamma (IFNg).

The enzyme catalyses ATP + ubiquitin + [E1 ubiquitin-activating enzyme]-L-cysteine = AMP + diphosphate + S-ubiquitinyl-[E1 ubiquitin-activating enzyme]-L-cysteine.. It functions in the pathway protein modification; protein ubiquitination. Activates ubiquitin by first adenylating its C-terminal glycine residue with ATP, and thereafter linking this residue to the side chain of a cysteine residue in E1, yielding a ubiquitin-E1 thioester and free AMP. Specific for ubiquitin, does not activate ubiquitin-like peptides. Also activates UBD/FAT10 conjugation via adenylation of its C-terminal glycine. Differs from UBE1 in its specificity for substrate E2 charging. Does not charge cell cycle E2s, such as CDC34. Essential for embryonic development. The sequence is that of Ubiquitin-like modifier-activating enzyme 6 (Uba6) from Mus musculus (Mouse).